We begin with the raw amino-acid sequence, 74 residues long: U4-theraphotoxin-Cg1a (74 aa).

Residues 1–19 form the signal peptide; that stretch reads MNATIFAFLLLLNLAMHNA. The propeptide occupies 20-39; the sequence is TEQSSETDMDDTLLIPEINR. 3 disulfide bridges follow: cysteine 42-cysteine 56, cysteine 49-cysteine 61, and cysteine 55-cysteine 71.

It belongs to the neurotoxin 36 family. 01 subfamily. As to expression, expressed by the venom gland.

The protein localises to the secreted. Probable ion channel inhibitor. This is U4-theraphotoxin-Cg1a from Chilobrachys guangxiensis (Chinese earth tiger tarantula).